The following is a 179-amino-acid chain: Large ribosomal subunit protein uL5 (179 aa).

The protein belongs to the universal ribosomal protein uL5 family. Part of the 50S ribosomal subunit; part of the 5S rRNA/L5/L18/L25 subcomplex. Contacts the 5S rRNA and the P site tRNA. Forms a bridge to the 30S subunit in the 70S ribosome.

This is one of the proteins that bind and probably mediate the attachment of the 5S RNA into the large ribosomal subunit, where it forms part of the central protuberance. In the 70S ribosome it contacts protein S13 of the 30S subunit (bridge B1b), connecting the 2 subunits; this bridge is implicated in subunit movement. Contacts the P site tRNA; the 5S rRNA and some of its associated proteins might help stabilize positioning of ribosome-bound tRNAs. In Mannheimia succiniciproducens (strain KCTC 0769BP / MBEL55E), this protein is Large ribosomal subunit protein uL5.